The primary structure comprises 184 residues: Photosystem I assembly protein Ycf4 (184 aa).

The next 2 helical transmembrane spans lie at asparagine 21 to tyrosine 43 and leucine 58 to leucine 80.

Belongs to the Ycf4 family.

It is found in the plastid. The protein resides in the chloroplast thylakoid membrane. Its function is as follows. Seems to be required for the assembly of the photosystem I complex. This chain is Photosystem I assembly protein Ycf4, found in Marchantia polymorpha (Common liverwort).